The sequence spans 507 residues: RNA-splicing ligase RtcB homolog (507 aa).

Residues Asp121, Cys124, His229, His261, and His355 each contribute to the Mn(2+) site. Residue 228-232 (NHYAE) coordinates GMP. GMP contacts are provided by residues 355–356 (HN), 404–407 (GGTM), Ser411, 430–433 (HGAG), and Lys506. The active-site GMP-histidine intermediate is the His430.

This sequence belongs to the RtcB family. In terms of assembly, catalytic component of the tRNA-splicing ligase complex. Requires Mn(2+) as cofactor.

The enzyme catalyses a 3'-end 3'-phospho-ribonucleotide-RNA + a 5'-end dephospho-ribonucleoside-RNA + GTP = a ribonucleotidyl-ribonucleotide-RNA + GMP + diphosphate. It carries out the reaction a 3'-end 2',3'-cyclophospho-ribonucleotide-RNA + a 5'-end dephospho-ribonucleoside-RNA + GTP + H2O = a ribonucleotidyl-ribonucleotide-RNA + GMP + diphosphate + H(+). In terms of biological role, catalytic subunit of the tRNA-splicing ligase complex that acts by directly joining spliced tRNA halves to mature-sized tRNAs by incorporating the precursor-derived splice junction phosphate into the mature tRNA as a canonical 3',5'-phosphodiester. May act as an RNA ligase with broad substrate specificity, and may function toward other RNAs. This Plasmodium yoelii yoelii protein is RNA-splicing ligase RtcB homolog.